Reading from the N-terminus, the 1171-residue chain is DNA-directed RNA polymerase subunit beta (1171 aa).

Belongs to the RNA polymerase beta chain family. The RNAP catalytic core consists of 2 alpha, 1 beta, 1 beta' and 1 omega subunit. When a sigma factor is associated with the core the holoenzyme is formed, which can initiate transcription.

It catalyses the reaction RNA(n) + a ribonucleoside 5'-triphosphate = RNA(n+1) + diphosphate. Functionally, DNA-dependent RNA polymerase catalyzes the transcription of DNA into RNA using the four ribonucleoside triphosphates as substrates. The sequence is that of DNA-directed RNA polymerase subunit beta from Arthrobacter sp. (strain FB24).